A 338-amino-acid chain; its full sequence is Mitochondrial glutathione transporter SLC25A40 (338 aa).

Solcar repeat units follow at residues 13 to 131 (VTPL…LTAL), 139 to 223 (NESR…LKKW), and 233 to 327 (PTFM…GKSF). Transmembrane regions (helical) follow at residues 19-39 (MFASCTGAILTSLMVTPFDVV), 103-123 (LWSGLPPTLVMAVPATVIYFT), 145-165 (IVAGIVARLGAVTVISPLELI), 199-220 (WAPTILRDVPFSAMYWYNYEVL), 239-259 (FTSGALSGSFAAVVTLPFDVV), and 298-318 (GLFTGLIPRLIKIAPACAVMI).

Belongs to the mitochondrial carrier (TC 2.A.29) family.

The protein localises to the mitochondrion inner membrane. It catalyses the reaction glutathione(in) = glutathione(out). Functionally, probable mitochondrial transporter required for glutathione import into mitochondria. Glutathione, which plays key roles in oxidative metabolism, is produced exclusively in the cytosol and is imported in many organelles. Mitochondrial glutathione is required for the activity and stability of proteins containing iron-sulfur clusters, as well as erythropoiesis. In Bos taurus (Bovine), this protein is Mitochondrial glutathione transporter SLC25A40.